Consider the following 118-residue polypeptide: Small ribosomal subunit protein uS13 (118 aa).

The segment at glycine 94–lysine 118 is disordered.

Belongs to the universal ribosomal protein uS13 family. Part of the 30S ribosomal subunit. Forms a loose heterodimer with protein S19. Forms two bridges to the 50S subunit in the 70S ribosome.

Its function is as follows. Located at the top of the head of the 30S subunit, it contacts several helices of the 16S rRNA. In the 70S ribosome it contacts the 23S rRNA (bridge B1a) and protein L5 of the 50S subunit (bridge B1b), connecting the 2 subunits; these bridges are implicated in subunit movement. Contacts the tRNAs in the A and P-sites. The sequence is that of Small ribosomal subunit protein uS13 from Erwinia tasmaniensis (strain DSM 17950 / CFBP 7177 / CIP 109463 / NCPPB 4357 / Et1/99).